The following is a 197-amino-acid chain: ATP-dependent Clp protease proteolytic subunit (197 aa).

S97 functions as the Nucleophile in the catalytic mechanism. H122 is an active-site residue.

Belongs to the peptidase S14 family. Fourteen ClpP subunits assemble into 2 heptameric rings which stack back to back to give a disk-like structure with a central cavity, resembling the structure of eukaryotic proteasomes.

The protein resides in the cytoplasm. The catalysed reaction is Hydrolysis of proteins to small peptides in the presence of ATP and magnesium. alpha-casein is the usual test substrate. In the absence of ATP, only oligopeptides shorter than five residues are hydrolyzed (such as succinyl-Leu-Tyr-|-NHMec, and Leu-Tyr-Leu-|-Tyr-Trp, in which cleavage of the -Tyr-|-Leu- and -Tyr-|-Trp bonds also occurs).. In terms of biological role, cleaves peptides in various proteins in a process that requires ATP hydrolysis. Has a chymotrypsin-like activity. Plays a major role in the degradation of misfolded proteins. This chain is ATP-dependent Clp protease proteolytic subunit, found in Trichlorobacter lovleyi (strain ATCC BAA-1151 / DSM 17278 / SZ) (Geobacter lovleyi).